The chain runs to 519 residues: ATP synthase subunit beta, mitochondrial (519 aa).

195 to 202 (GGAGVGKT) contacts ATP.

It belongs to the ATPase alpha/beta chains family. F-type ATPases have 2 components, CF(1) - the catalytic core - and CF(0) - the membrane proton channel. CF(1) has five subunits: alpha(3), beta(3), gamma(1), delta(1), epsilon(1). CF(0) has three main subunits: a, b and c.

It is found in the mitochondrion. Its subcellular location is the mitochondrion inner membrane. The catalysed reaction is ATP + H2O + 4 H(+)(in) = ADP + phosphate + 5 H(+)(out). Functionally, mitochondrial membrane ATP synthase (F(1)F(0) ATP synthase or Complex V) produces ATP from ADP in the presence of a proton gradient across the membrane which is generated by electron transport complexes of the respiratory chain. F-type ATPases consist of two structural domains, F(1) - containing the extramembraneous catalytic core, and F(0) - containing the membrane proton channel, linked together by a central stalk and a peripheral stalk. During catalysis, ATP synthesis in the catalytic domain of F(1) is coupled via a rotary mechanism of the central stalk subunits to proton translocation. Subunits alpha and beta form the catalytic core in F(1). Rotation of the central stalk against the surrounding alpha(3)beta(3) subunits leads to hydrolysis of ATP in three separate catalytic sites on the beta subunits. The sequence is that of ATP synthase subunit beta, mitochondrial (atp-2) from Neurospora crassa (strain ATCC 24698 / 74-OR23-1A / CBS 708.71 / DSM 1257 / FGSC 987).